Consider the following 433-residue polypeptide: tRNA modification GTPase MnmE (433 aa).

(6S)-5-formyl-5,6,7,8-tetrahydrofolate contacts are provided by arginine 24, glutamate 81, and arginine 120. Residues 216 to 359 (GVEIVVLGAP…LLAALRARVE (144 aa)) form the TrmE-type G domain. Asparagine 226 provides a ligand contact to K(+). GTP-binding positions include 226-231 (NAGKST), 245-251 (SDIPGTT), 270-273 (DTAG), and 340-342 (SAR). Position 230 (serine 230) interacts with Mg(2+). 3 residues coordinate K(+): serine 245, isoleucine 247, and threonine 250. Residue threonine 251 participates in Mg(2+) binding. Lysine 433 is a binding site for (6S)-5-formyl-5,6,7,8-tetrahydrofolate.

This sequence belongs to the TRAFAC class TrmE-Era-EngA-EngB-Septin-like GTPase superfamily. TrmE GTPase family. As to quaternary structure, homodimer. Heterotetramer of two MnmE and two MnmG subunits. K(+) serves as cofactor.

It is found in the cytoplasm. Functionally, exhibits a very high intrinsic GTPase hydrolysis rate. Involved in the addition of a carboxymethylaminomethyl (cmnm) group at the wobble position (U34) of certain tRNAs, forming tRNA-cmnm(5)s(2)U34. The polypeptide is tRNA modification GTPase MnmE (Acidiphilium cryptum (strain JF-5)).